The sequence spans 402 residues: NADH-quinone oxidoreductase subunit D (402 aa).

Belongs to the complex I 49 kDa subunit family. In terms of assembly, NDH-1 is composed of 14 different subunits. Subunits NuoB, C, D, E, F, and G constitute the peripheral sector of the complex.

The protein localises to the cell inner membrane. The catalysed reaction is a quinone + NADH + 5 H(+)(in) = a quinol + NAD(+) + 4 H(+)(out). In terms of biological role, NDH-1 shuttles electrons from NADH, via FMN and iron-sulfur (Fe-S) centers, to quinones in the respiratory chain. The immediate electron acceptor for the enzyme in this species is believed to be ubiquinone. Couples the redox reaction to proton translocation (for every two electrons transferred, four hydrogen ions are translocated across the cytoplasmic membrane), and thus conserves the redox energy in a proton gradient. The sequence is that of NADH-quinone oxidoreductase subunit D from Protochlamydia amoebophila (strain UWE25).